The following is a 280-amino-acid chain: UPF0328 protein ECU06_0020/ECU06_1700 (280 aa).

This sequence belongs to the UPF0328 family.

The polypeptide is UPF0328 protein ECU06_0020/ECU06_1700 (Encephalitozoon cuniculi (strain GB-M1) (Microsporidian parasite)).